Reading from the N-terminus, the 258-residue chain is 14-3-3-like protein F (258 aa).

It belongs to the 14-3-3 family.

The sequence is that of 14-3-3-like protein F from Nicotiana tabacum (Common tobacco).